The chain runs to 224 residues: MTRISREMMKDMLSVYFIMGSNNTSADPVSVVEKAIEGGATLFQFREKGSGSLTGEERLLFAKRVQDVCRQAGIPFIINDDVELALRLEADGVHIGQDDADAEETRAAIGDMILGVSAHNVSEVKRAEAAGADYVGMGPVYPTETKKDAEAVQGVTLIEEVRRQGITIPIVGIGGITADNAAPVIEAGADGVSMISAISQAEDPKAAARKFSEEIRRSKAGLSR.

4-amino-2-methyl-5-(diphosphooxymethyl)pyrimidine contacts are provided by residues 44 to 48 and N79; that span reads QFREK. Positions 80 and 99 each coordinate Mg(2+). S117 is a 4-amino-2-methyl-5-(diphosphooxymethyl)pyrimidine binding site. Residue 143–145 coordinates 2-[(2R,5Z)-2-carboxy-4-methylthiazol-5(2H)-ylidene]ethyl phosphate; that stretch reads TET. Position 146 (K146) interacts with 4-amino-2-methyl-5-(diphosphooxymethyl)pyrimidine. 2-[(2R,5Z)-2-carboxy-4-methylthiazol-5(2H)-ylidene]ethyl phosphate is bound by residues G175 and 195–196; that span reads IS.

This sequence belongs to the thiamine-phosphate synthase family. Mg(2+) serves as cofactor.

It carries out the reaction 2-[(2R,5Z)-2-carboxy-4-methylthiazol-5(2H)-ylidene]ethyl phosphate + 4-amino-2-methyl-5-(diphosphooxymethyl)pyrimidine + 2 H(+) = thiamine phosphate + CO2 + diphosphate. The catalysed reaction is 2-(2-carboxy-4-methylthiazol-5-yl)ethyl phosphate + 4-amino-2-methyl-5-(diphosphooxymethyl)pyrimidine + 2 H(+) = thiamine phosphate + CO2 + diphosphate. The enzyme catalyses 4-methyl-5-(2-phosphooxyethyl)-thiazole + 4-amino-2-methyl-5-(diphosphooxymethyl)pyrimidine + H(+) = thiamine phosphate + diphosphate. It functions in the pathway cofactor biosynthesis; thiamine diphosphate biosynthesis; thiamine phosphate from 4-amino-2-methyl-5-diphosphomethylpyrimidine and 4-methyl-5-(2-phosphoethyl)-thiazole: step 1/1. Its function is as follows. Condenses 4-methyl-5-(beta-hydroxyethyl)thiazole monophosphate (THZ-P) and 2-methyl-4-amino-5-hydroxymethyl pyrimidine pyrophosphate (HMP-PP) to form thiamine monophosphate (TMP). This chain is Thiamine-phosphate synthase, found in Bacillus velezensis (strain DSM 23117 / BGSC 10A6 / LMG 26770 / FZB42) (Bacillus amyloliquefaciens subsp. plantarum).